An 819-amino-acid chain; its full sequence is Cadherin-24 (819 aa).

The signal sequence occupies residues 1–19 (MWGLVRLLLAWLGGWGCMG). Positions 21 to 44 (LAAPARAWAGSREHPGPALLRTRR) are excised as a propeptide. Residues 45-641 (SWVWNQFFVI…LSAAGLSTGA (597 aa)) lie on the Extracellular side of the membrane. Cadherin domains are found at residues 46-150 (WVWN…PPIF), 151-259 (PLGP…PPKF), 260-374 (PQSL…PPAF), 375-517 (TQAA…APQL), and 517-630 (LAEP…WPEA). 3 N-linked (GlcNAc...) asparagine glycosylation sites follow: Asn-446, Asn-548, and Asn-563. The chain crosses the membrane as a helical span at residues 642–662 (LLAIITCVGALLALVVLFVAL). The Cytoplasmic portion of the chain corresponds to 663-819 (RRQKQEALMV…LYGAKEPPAP (157 aa)). Residues 768 to 800 (YEGRGSSCGSLSSLGSGSEAGGAPGPAEPLDDW) are disordered. Positions 771-784 (RGSSCGSLSSLGSG) are enriched in low complexity.

In terms of assembly, associates with alpha-, beta- and delta-catenins.

The protein localises to the cell membrane. Functionally, cadherins are calcium-dependent cell adhesion proteins. They preferentially interact with themselves in a homophilic manner in connecting cells; cadherins may thus contribute to the sorting of heterogeneous cell types. Cadherin-24 mediate strong cell-cell adhesion. The chain is Cadherin-24 (CDH24) from Homo sapiens (Human).